Reading from the N-terminus, the 555-residue chain is MNEADARPTNFIRQIIDEDLATGKHNSVHTRFPPEPNGYLHIGHAKSICLNFGIAQDYQGKCNLRFDDTNPVKEDVEYINSIQKDVQWLGFQWDGNVHYSSDYFDQLYQYAIELINKGLAYVDELSAEEIREYRGTLKEPGKNSPYRSRSVEENLALFEKMRAGGFEEGKACLRAKIDMASPFIVMRDPVLYRIKFAEHHQTGNKWCIYPMYDFTHCISDALENITHSLCTLEFQDNRRLYDWVLDNITIPCHPRQYEFSRLNLEYTVMSKRKLNQLVTENIVDGWDDPRMPTISGLRRRGYTAESIREFCQRIGVTKQDNNVEMASLEACIRDDLNENAPRAMAVIDPVRLVIENMPEGEEILTAPNHPNKPEMGTREVPFSREIYIDRADFKEEANRQYKRLVLGKEVRLRNAYVIKAERVEKDEQGEITTIYCTYDPQTLNKDPADGRKVKGVIHWVSIPHAIPAEIRLYDRLFSVPNPGAEEDFLSTINPESLVIRQGFVEASLKDAAIEKAYQFEREGYFCADKLSTADKLVFNRTVGLRDTWAKISKQG.

The 'HIGH' region motif lies at 34 to 44 (PEPNGYLHIGH). Residues 35 to 37 (EPN) and 41 to 47 (HIGHAKS) contribute to the ATP site. L-glutamine contacts are provided by Asp-67 and Tyr-212. ATP is bound by residues Thr-231, 261–262 (RL), and 269–271 (MSK). A 'KMSKS' region motif is present at residues 268 to 272 (VMSKR).

Belongs to the class-I aminoacyl-tRNA synthetase family. As to quaternary structure, monomer.

The protein localises to the cytoplasm. The catalysed reaction is tRNA(Gln) + L-glutamine + ATP = L-glutaminyl-tRNA(Gln) + AMP + diphosphate. The polypeptide is Glutamine--tRNA ligase (Proteus mirabilis (strain HI4320)).